A 250-amino-acid chain; its full sequence is Expansin-like B1 (250 aa).

An N-terminal signal peptide occupies residues 1–24 (MKHSHVLLLLFVQVIVLLPLLCLS). Positions 45–149 (RGHCGYGEFG…QRIPCRYAGY (105 aa)) constitute an Expansin-like EG45 domain. N72 is a glycosylation site (N-linked (GlcNAc...) asparagine). The region spanning 163-245 (HYLAILVLYV…DWTAGATYDS (83 aa)) is the Expansin-like CBD domain.

Belongs to the expansin family. Expansin-like B subfamily.

It is found in the secreted. The protein is Expansin-like B1 (EXLB1) of Arabidopsis thaliana (Mouse-ear cress).